Here is a 145-residue protein sequence, read N- to C-terminus: Protein SprT-like (145 aa).

One can recognise a SprT-like domain in the interval 5–140 (DYVREVSLAD…ACGRCHGRLI (136 aa)). His-64 serves as a coordination point for Zn(2+). Glu-65 is an active-site residue. His-68 contacts Zn(2+).

The protein belongs to the SprT family. Requires Zn(2+) as cofactor.

Its subcellular location is the cytoplasm. In Streptococcus equi subsp. equi (strain 4047), this protein is Protein SprT-like.